The sequence spans 734 residues: Photosystem I P700 chlorophyll a apoprotein A2 (734 aa).

Transmembrane regions (helical) follow at residues 46-69 (IFAS…FHVA), 135-158 (LYTG…LHLQ), 175-199 (LNHH…HVAI), 273-291 (IAHH…GHMY), 330-353 (LHFQ…QHMY), 369-395 (AALY…IFFI), 417-439 (AIIS…LYVH), and 517-535 (FLVH…LILV). [4Fe-4S] cluster-binding residues include Cys559 and Cys568. The next 2 helical transmembrane spans lie at 575-596 (AFYL…YWHW) and 643-665 (LSVW…MFLI). His654, Met662, and Tyr670 together coordinate chlorophyll a. Phylloquinone is bound at residue Trp671. Residues 707-727 (LVGLAHFSVGYIFTYAAFLIA) form a helical membrane-spanning segment.

Belongs to the PsaA/PsaB family. As to quaternary structure, the PsaA/B heterodimer binds the P700 chlorophyll special pair and subsequent electron acceptors. PSI consists of a core antenna complex that captures photons, and an electron transfer chain that converts photonic excitation into a charge separation. The eukaryotic PSI reaction center is composed of at least 11 subunits. P700 is a chlorophyll a/chlorophyll a' dimer, A0 is one or more chlorophyll a, A1 is one or both phylloquinones and FX is a shared 4Fe-4S iron-sulfur center. serves as cofactor.

It localises to the plastid. The protein resides in the chloroplast thylakoid membrane. It carries out the reaction reduced [plastocyanin] + hnu + oxidized [2Fe-2S]-[ferredoxin] = oxidized [plastocyanin] + reduced [2Fe-2S]-[ferredoxin]. PsaA and PsaB bind P700, the primary electron donor of photosystem I (PSI), as well as the electron acceptors A0, A1 and FX. PSI is a plastocyanin-ferredoxin oxidoreductase, converting photonic excitation into a charge separation, which transfers an electron from the donor P700 chlorophyll pair to the spectroscopically characterized acceptors A0, A1, FX, FA and FB in turn. Oxidized P700 is reduced on the lumenal side of the thylakoid membrane by plastocyanin. The protein is Photosystem I P700 chlorophyll a apoprotein A2 of Piper cenocladum (Ant piper).